A 236-amino-acid polypeptide reads, in one-letter code: Large ribosomal subunit protein uL3 (236 aa).

Belongs to the universal ribosomal protein uL3 family. In terms of assembly, part of the 50S ribosomal subunit. Forms a cluster with proteins L14 and L19.

One of the primary rRNA binding proteins, it binds directly near the 3'-end of the 23S rRNA, where it nucleates assembly of the 50S subunit. The polypeptide is Large ribosomal subunit protein uL3 (Anaeromyxobacter dehalogenans (strain 2CP-1 / ATCC BAA-258)).